A 325-amino-acid polypeptide reads, in one-letter code: Beta-ketoacyl-[acyl-carrier-protein] synthase III (325 aa).

Residues cysteine 119 and histidine 252 contribute to the active site. The segment at 253-257 is ACP-binding; it reads QANLR. Asparagine 282 is a catalytic residue.

Belongs to the thiolase-like superfamily. FabH family. Homodimer.

It localises to the cytoplasm. It carries out the reaction malonyl-[ACP] + acetyl-CoA + H(+) = 3-oxobutanoyl-[ACP] + CO2 + CoA. It participates in lipid metabolism; fatty acid biosynthesis. In terms of biological role, catalyzes the condensation reaction of fatty acid synthesis by the addition to an acyl acceptor of two carbons from malonyl-ACP. Catalyzes the first condensation reaction which initiates fatty acid synthesis and may therefore play a role in governing the total rate of fatty acid production. Possesses both acetoacetyl-ACP synthase and acetyl transacylase activities. Its substrate specificity determines the biosynthesis of branched-chain and/or straight-chain of fatty acids. The polypeptide is Beta-ketoacyl-[acyl-carrier-protein] synthase III (Polaromonas naphthalenivorans (strain CJ2)).